The primary structure comprises 89 residues: Putative ankyrin repeat protein RF_1157 (89 aa).

The stretch at 2–32 (YNTTPLNFAINQENNEEVIKYLLANGANPRL) is one ANK repeat.

This is Putative ankyrin repeat protein RF_1157 from Rickettsia felis (strain ATCC VR-1525 / URRWXCal2) (Rickettsia azadi).